The sequence spans 252 residues: Triosephosphate isomerase (252 aa).

9 to 11 contributes to the substrate binding site; the sequence is NWK. The active-site Electrophile is histidine 100. Glutamate 171 serves as the catalytic Proton acceptor. Substrate contacts are provided by residues glycine 177, serine 216, and 237–238; that span reads GG.

It belongs to the triosephosphate isomerase family. Homodimer.

It is found in the cytoplasm. It catalyses the reaction D-glyceraldehyde 3-phosphate = dihydroxyacetone phosphate. Its pathway is carbohydrate biosynthesis; gluconeogenesis. The protein operates within carbohydrate degradation; glycolysis; D-glyceraldehyde 3-phosphate from glycerone phosphate: step 1/1. Involved in the gluconeogenesis. Catalyzes stereospecifically the conversion of dihydroxyacetone phosphate (DHAP) to D-glyceraldehyde-3-phosphate (G3P). In Polynucleobacter necessarius subsp. necessarius (strain STIR1), this protein is Triosephosphate isomerase.